An 840-amino-acid chain; its full sequence is Protein translocase subunit SecA (840 aa).

Residues Gln85, 103-107, and Asp492 contribute to the ATP site; that span reads GEGKT. Residues 787 to 821 are disordered; the sequence is QRERVAKETGASHGGDSQEIKKKPVKKEPKVGRND. Residues 802-819 show a composition bias toward basic and acidic residues; sequence DSQEIKKKPVKKEPKVGR. Zn(2+)-binding residues include Cys823, Cys825, Cys834, and Cys835.

Belongs to the SecA family. In terms of assembly, monomer and homodimer. Part of the essential Sec protein translocation apparatus which comprises SecA, SecYEG and auxiliary proteins SecDF. Other proteins may also be involved. Zn(2+) serves as cofactor.

The protein localises to the cell membrane. It localises to the cytoplasm. It catalyses the reaction ATP + H2O + cellular proteinSide 1 = ADP + phosphate + cellular proteinSide 2.. Its function is as follows. Part of the Sec protein translocase complex. Interacts with the SecYEG preprotein conducting channel. Has a central role in coupling the hydrolysis of ATP to the transfer of proteins into and across the cell membrane, serving as an ATP-driven molecular motor driving the stepwise translocation of polypeptide chains across the membrane. This chain is Protein translocase subunit SecA, found in Clostridium perfringens (strain SM101 / Type A).